Reading from the N-terminus, the 556-residue chain is Fiber protein (556 aa).

A disordered region spans residues 1-22 (MKRSRTQYAEEPEENDDFNPVY).

Belongs to the adenoviridae fiber family. As to quaternary structure, homotrimer. Interacts with host receptor CXCAR. Interacts (via N-terminal tail region) with pentons.

It localises to the virion. It is found in the host nucleus. Functionally, forms spikes that protrude from each vertex of the icosahedral capsid. Interacts with host receptor CXCAR to provide virion initial attachment to target cell. Fiber proteins are shed during virus entry, when virus is still at the cell surface. The polypeptide is Fiber protein (Human adenovirus A serotype 31 (HAdV-31)).